A 323-amino-acid chain; its full sequence is Elongation factor P--(R)-beta-lysine ligase (323 aa).

76–78 (SPE) contributes to the substrate binding site. ATP contacts are provided by residues 100 to 102 (RNE) and asparagine 109. Tyrosine 118 lines the substrate pocket. 242-243 (EL) contacts ATP. Glutamate 249 contacts substrate. Glycine 298 serves as a coordination point for ATP.

The protein belongs to the class-II aminoacyl-tRNA synthetase family. EpmA subfamily. As to quaternary structure, homodimer.

It catalyses the reaction D-beta-lysine + L-lysyl-[protein] + ATP = N(6)-((3R)-3,6-diaminohexanoyl)-L-lysyl-[protein] + AMP + diphosphate + H(+). In terms of biological role, with EpmB is involved in the beta-lysylation step of the post-translational modification of translation elongation factor P (EF-P). Catalyzes the ATP-dependent activation of (R)-beta-lysine produced by EpmB, forming a lysyl-adenylate, from which the beta-lysyl moiety is then transferred to the epsilon-amino group of a conserved specific lysine residue in EF-P. The protein is Elongation factor P--(R)-beta-lysine ligase of Haemophilus influenzae (strain ATCC 51907 / DSM 11121 / KW20 / Rd).